The chain runs to 84 residues: uncharacterized protein (84 aa).

Transmembrane regions (helical) follow at residues 8 to 28 (IYFF…VNLL), 30 to 50 (INVI…ISTI), and 63 to 83 (VLFM…LYIP).

The protein resides in the cell membrane. This is an uncharacterized protein from Methanocaldococcus jannaschii (strain ATCC 43067 / DSM 2661 / JAL-1 / JCM 10045 / NBRC 100440) (Methanococcus jannaschii).